An 850-amino-acid chain; its full sequence is Transforming growth factor beta receptor type 3 (850 aa).

Positions 1-22 (MAVTSHHMVPVFVLMSACLATA) are cleaved as a signal peptide. Over 23 to 785 (GPEPSTRCEL…QIFHGLDTLT (763 aa)) the chain is Extracellular. An intrachain disulfide couples Cys54 to Cys199. N-linked (GlcNAc...) asparagine glycosylation is found at Asn143 and Asn491. Residues 454-728 (KCDNEKMVVA…PKCVTPDDAC (275 aa)) enclose the ZP domain. The disordered stretch occupies residues 528–557 (SPGDSSGWPDGYEDLESGDNGFPGDTDEGE). O-linked (Xyl...) (glycosaminoglycan) serine glycans are attached at residues Ser533 and Ser544. Residues Asn570, Asn589, and Asn696 are each glycosylated (N-linked (GlcNAc...) asparagine). 3 disulfides stabilise this stretch: Cys638–Cys704, Cys659–Cys728, and Cys709–Cys721. The interval 735 to 749 (MIWTMMQNKKTFTKP) is interaction with TGF-beta ligand. The helical transmembrane segment at 786–808 (VMGIAFAAFVIGALLTGALWYIY) threads the bilayer. The Cytoplasmic segment spans residues 809–850 (SHTGETARRQQVPTSPPASENSSAAHSIGSTQSTPCSSSSTA). A compositionally biased stretch (polar residues) spans 817-833 (RQQVPTSPPASENSSAA). The tract at residues 817-850 (RQQVPTSPPASENSSAAHSIGSTQSTPCSSSSTA) is disordered. A compositionally biased stretch (low complexity) spans 835–850 (SIGSTQSTPCSSSSTA). Thr839 is subject to Phosphothreonine.

In terms of assembly, forms homodimers and homooligomers. Interacts with DYNLT4. Interacts with integrin ITGA5:ITGB1; this interaction promotes the internalization and trafficking of ITGA5:ITGB1 into endocytic vesicles. Interacts with TGFB1, BMP2, BMP5, BMP7 or GDF5 and inhibin A via the ligand binding domains. Interacts with ALK3/BMPR1A; this interaction results in the cell surface retention of BMPR1A. Interacts with ALK6/BMPR1B; this interaction enhances BMPR1B-mediated stimulation of the BMP signaling pathway. Interacts with the scaffolding protein beta-arrestin2/ARRB2; this interaction mediates internalization of TGFBR3 and thus regulates migration, actin cytoskeleton and activation of CDC42. Post-translationally, extensively modified by glycosaminoglycan groups (GAG). In terms of processing, phosphorylated in the cytoplasmic domain by the type II receptor TGFBR2 at THR-839 to mediate recruitment of ARRB2 and subsequent internalization of TGFBR2 and TGFBR3.

Its subcellular location is the cell membrane. It localises to the secreted. The protein resides in the extracellular space. The protein localises to the extracellular matrix. In terms of biological role, cell surface receptor that regulates diverse cellular processes including cell proliferation, differentiation, migration, and apoptosis. Initiates BMP, inhibin, and TGF-beta signaling pathways by interacting with different ligands including TGFB1, BMP2, BMP5, BMP7 or GDF5. Alternatively, acts as a cell surface coreceptor for BMP ligands, serving to enhance ligand binding by differentially regulating BMPR1A/ALK3 and BMPR1B/ALK6 receptor trafficking. Promotes epithelial cell adhesion, focal adhesion formation and integrin signaling during epithelial cell spreading on fibronectin. By interacting with the scaffolding protein beta-arrestin2/ARRB2, regulates migration or actin cytoskeleton and promotes the activation of CDC42 as well as the inhibition of NF-kappa-B. In gonadotrope cells, acts as an inhibin A coreceptor and regulates follicle-stimulating hormone (FSH) levels and female fertility. Plays a role in the inhibition of directed and random cell migration in epithelial cells by altering the actin cytoskeletal organization. Participates in epithelial-mesenchymal transformation (EMT) upon binding to BMP2 or TGFB2, by activating the PAR6/SMURF1/RHOA pathway. This is Transforming growth factor beta receptor type 3 (Tgfbr3) from Mus musculus (Mouse).